The sequence spans 166 residues: Thiamine precursor transporter HmpT (166 aa).

The next 5 helical transmembrane spans lie at 14–34, 35–55, 62–82, 105–125, and 126–146; these read LLAI…FPIP, GSAG…VFLF, IIGG…NYMF, FLLS…LMYG, and WGSA…GFVL.

As to quaternary structure, in E.coli forms a stable energy-coupling factor (ECF) transporter complex composed of 2 membrane-embedded substrate-binding protein (S component), 2 ATP-binding proteins (A and A' components) and 2 transmembrane proteins (T component), probably with a stoichiometry of 2:1:1:2. May be able to interact with more than 1 S component at a time.

It is found in the cell membrane. In terms of biological role, probably a thiamine precursor-binding protein that interacts with the energy-coupling factor (ECF) ABC-transporter complex. Unlike classic ABC transporters this ECF transporter provides the energy necessary to transport a number of different substrates. The substrates themselves are bound by transmembrane, not extracytoplasmic soluble proteins. This is Thiamine precursor transporter HmpT (hmpT) from Lactococcus lactis subsp. cremoris (strain MG1363).